Consider the following 1927-residue polypeptide: Integrin beta-like protein A (1927 aa).

An N-terminal signal peptide occupies residues 1 to 20 (MNRILTLFILFISLFIVCEA). At 21–1860 (THFRFGTMSW…KENNNKTVLT (1840 aa)) the chain is on the extracellular side. The N-linked (GlcNAc...) asparagine glycan is linked to Asn309. In terms of domain architecture, EGF-like spans 425–462 (YGEKCDPVDPCVNGESNEGSQGNGKCTCYYGWEGKNCD). 2 cysteine pairs are disulfide-bonded: Cys435-Cys450 and Cys452-Cys461. In terms of domain architecture, VWFA spans 522–709 (EVLVLVDSQP…VLSKAVVKAI (188 aa)). Asn1122, Asn1516, Asn1717, Asn1723, and Asn1855 each carry an N-linked (GlcNAc...) asparagine glycan. The helical transmembrane segment at 1861-1881 (GAIAGAAAGAGLLAAGAWFLL) threads the bilayer. The Cytoplasmic portion of the chain corresponds to 1882 to 1927 (KKSAPPTDAFFGEGAFADGAVSTNPMYEESGRSAINPLYEASSENL).

Belongs to the SIB family. Interacts with talA/talin.

Its subcellular location is the membrane. Functionally, implicated in cellular adhesion to substrate or phagocytic particles. In Dictyostelium discoideum (Social amoeba), this protein is Integrin beta-like protein A (sibA).